The chain runs to 427 residues: Enolase (427 aa).

Q162 lines the (2R)-2-phosphoglycerate pocket. E204 (proton donor) is an active-site residue. Residues D241, E282, and D309 each coordinate Mg(2+). 4 residues coordinate (2R)-2-phosphoglycerate: K334, R363, S364, and K385. K334 (proton acceptor) is an active-site residue.

This sequence belongs to the enolase family. Mg(2+) serves as cofactor.

It localises to the cytoplasm. The protein localises to the secreted. The protein resides in the cell surface. It carries out the reaction (2R)-2-phosphoglycerate = phosphoenolpyruvate + H2O. The protein operates within carbohydrate degradation; glycolysis; pyruvate from D-glyceraldehyde 3-phosphate: step 4/5. Catalyzes the reversible conversion of 2-phosphoglycerate (2-PG) into phosphoenolpyruvate (PEP). It is essential for the degradation of carbohydrates via glycolysis. The chain is Enolase from Parafrankia sp. (strain EAN1pec).